A 256-amino-acid chain; its full sequence is 5-keto-4-deoxy-D-glucarate aldolase (256 aa).

The Proton acceptor role is filled by His-50. Residue Gln-151 coordinates substrate. Glu-153 provides a ligand contact to Mg(2+). Substrate-binding residues include Ser-178 and Asp-179. Mg(2+) is bound at residue Asp-179.

This sequence belongs to the HpcH/HpaI aldolase family. KDGluc aldolase subfamily. Homohexamer; trimer of dimers. The cofactor is Mg(2+).

The enzyme catalyses 5-dehydro-4-deoxy-D-glucarate = 2-hydroxy-3-oxopropanoate + pyruvate. It catalyses the reaction 2-dehydro-3-deoxy-D-glucarate = 2-hydroxy-3-oxopropanoate + pyruvate. It participates in carbohydrate acid metabolism; galactarate degradation; D-glycerate from galactarate: step 2/3. In terms of biological role, catalyzes the reversible retro-aldol cleavage of both 5-keto-4-deoxy-D-glucarate and 2-keto-3-deoxy-D-glucarate to pyruvate and tartronic semialdehyde. The chain is 5-keto-4-deoxy-D-glucarate aldolase from Escherichia coli O157:H7 (strain EC4115 / EHEC).